The primary structure comprises 298 residues: Thymidylate synthase (298 aa).

DUMP contacts are provided by residues Arg25 and Arg159–Arg160. Cys179 (nucleophile) is an active-site residue. Residues Arg200 to Asp203, Asn211, and His241 to Tyr243 contribute to the dUMP site. Asp203 provides a ligand contact to (6R)-5,10-methylene-5,6,7,8-tetrahydrofolate. A (6R)-5,10-methylene-5,6,7,8-tetrahydrofolate-binding site is contributed by Ala297.

It belongs to the thymidylate synthase family. Bacterial-type ThyA subfamily. As to quaternary structure, homodimer.

The protein localises to the cytoplasm. The catalysed reaction is dUMP + (6R)-5,10-methylene-5,6,7,8-tetrahydrofolate = 7,8-dihydrofolate + dTMP. The protein operates within pyrimidine metabolism; dTTP biosynthesis. Its function is as follows. Catalyzes the reductive methylation of 2'-deoxyuridine-5'-monophosphate (dUMP) to 2'-deoxythymidine-5'-monophosphate (dTMP) while utilizing 5,10-methylenetetrahydrofolate (mTHF) as the methyl donor and reductant in the reaction, yielding dihydrofolate (DHF) as a by-product. This enzymatic reaction provides an intracellular de novo source of dTMP, an essential precursor for DNA biosynthesis. This chain is Thymidylate synthase, found in Cereibacter sphaeroides (strain ATCC 17025 / ATH 2.4.3) (Rhodobacter sphaeroides).